The chain runs to 377 residues: UPF0425 pyridoxal phosphate-dependent protein MTH_1914 (377 aa).

Lys-207 is modified (N6-(pyridoxal phosphate)lysine).

This sequence belongs to the UPF0425 family. Pyridoxal 5'-phosphate serves as cofactor.

The protein is UPF0425 pyridoxal phosphate-dependent protein MTH_1914 of Methanothermobacter thermautotrophicus (strain ATCC 29096 / DSM 1053 / JCM 10044 / NBRC 100330 / Delta H) (Methanobacterium thermoautotrophicum).